The chain runs to 328 residues: Acetaldehyde dehydrogenase 3 (328 aa).

17 to 20 is an NAD(+) binding site; the sequence is SGNI. The active-site Acyl-thioester intermediate is cysteine 135. NAD(+)-binding positions include 166–174 and asparagine 298; that span reads SAGPGTRAN.

It belongs to the acetaldehyde dehydrogenase family.

It carries out the reaction acetaldehyde + NAD(+) + CoA = acetyl-CoA + NADH + H(+). The protein is Acetaldehyde dehydrogenase 3 of Nocardia farcinica (strain IFM 10152).